The sequence spans 422 residues: MLDINFIESNLVKVKEQLNKRSGDYSLIIDEAVELNVQRKSILKEVENLKANKNNLSKQVGELMRNKQSDEANKIKEEVTLINSKIEKLDDSLKLVQEQLTSKLQNIPNIPNDNMPIGNDDNDNVEVRQWGNELIKKHNTPHWDIADKLKLVDFEAGPKLSGSRFVVYTGLGAKLVRSLSNILLNLHTSKGYTEITVPLLVNPQAMYGTGQLPKFKEDAYITTNDQYLIPTGEVPLTNLHAGEILDLNQLPIHYTTYSQCFRQEAGSAGRDTKGLIRLHQFNKVELVKITNQESSEAELQAMVNDAEAVLQLFNLPYRVVELCTGDVGFSSSKTYDLEVWFPEQNKYREISSCSNCTDFQARNMQTRYRDANGEVKLAHTLNGSGVAIDRLIAAILENYWDGEKLILPTALKPYFDNKEYID.

231-233 contributes to the L-serine binding site; it reads TGE. An ATP-binding site is contributed by 262 to 264; sequence RQE. Residue Glu285 coordinates L-serine. ATP is bound at residue 349–352; sequence EISS. L-serine is bound at residue Ser384.

Belongs to the class-II aminoacyl-tRNA synthetase family. Type-1 seryl-tRNA synthetase subfamily. In terms of assembly, homodimer. The tRNA molecule binds across the dimer.

Its subcellular location is the cytoplasm. It carries out the reaction tRNA(Ser) + L-serine + ATP = L-seryl-tRNA(Ser) + AMP + diphosphate + H(+). It catalyses the reaction tRNA(Sec) + L-serine + ATP = L-seryl-tRNA(Sec) + AMP + diphosphate + H(+). Its pathway is aminoacyl-tRNA biosynthesis; selenocysteinyl-tRNA(Sec) biosynthesis; L-seryl-tRNA(Sec) from L-serine and tRNA(Sec): step 1/1. Catalyzes the attachment of serine to tRNA(Ser). Is also able to aminoacylate tRNA(Sec) with serine, to form the misacylated tRNA L-seryl-tRNA(Sec), which will be further converted into selenocysteinyl-tRNA(Sec). This chain is Serine--tRNA ligase, found in Mesoplasma florum (strain ATCC 33453 / NBRC 100688 / NCTC 11704 / L1) (Acholeplasma florum).